Consider the following 302-residue polypeptide: NAD kinase (302 aa).

D79 functions as the Proton acceptor in the catalytic mechanism. Residues 79 to 80 (DG), 153 to 154 (ND), R181, D183, 194 to 199 (TAYALS), A218, and Q252 each bind NAD(+).

This sequence belongs to the NAD kinase family. Requires a divalent metal cation as cofactor.

It is found in the cytoplasm. It carries out the reaction NAD(+) + ATP = ADP + NADP(+) + H(+). In terms of biological role, involved in the regulation of the intracellular balance of NAD and NADP, and is a key enzyme in the biosynthesis of NADP. Catalyzes specifically the phosphorylation on 2'-hydroxyl of the adenosine moiety of NAD to yield NADP. This Ralstonia nicotianae (strain ATCC BAA-1114 / GMI1000) (Ralstonia solanacearum) protein is NAD kinase.